The chain runs to 298 residues: uncharacterized protein (298 aa).

To M.tuberculosis Rv1486c, M.bovis Mb1522c and M.avium MAV321.

This is an uncharacterized protein from Mycobacterium leprae (strain TN).